The chain runs to 346 residues: Probable dual-specificity RNA methyltransferase RlmN (346 aa).

Residue Glu76 is the Proton acceptor of the active site. The region spanning 97 to 329 (SYDRATICVS…TFIRKPRGRD (233 aa)) is the Radical SAM core domain. The cysteines at positions 104 and 334 are disulfide-linked. Cys111, Cys115, and Cys118 together coordinate [4Fe-4S] cluster. S-adenosyl-L-methionine contacts are provided by residues 162-163 (GE), Ser192, 215-217 (SLN), and Asn291. Cys334 serves as the catalytic S-methylcysteine intermediate.

It belongs to the radical SAM superfamily. RlmN family. [4Fe-4S] cluster is required as a cofactor.

It is found in the cytoplasm. The catalysed reaction is adenosine(2503) in 23S rRNA + 2 reduced [2Fe-2S]-[ferredoxin] + 2 S-adenosyl-L-methionine = 2-methyladenosine(2503) in 23S rRNA + 5'-deoxyadenosine + L-methionine + 2 oxidized [2Fe-2S]-[ferredoxin] + S-adenosyl-L-homocysteine. It carries out the reaction adenosine(37) in tRNA + 2 reduced [2Fe-2S]-[ferredoxin] + 2 S-adenosyl-L-methionine = 2-methyladenosine(37) in tRNA + 5'-deoxyadenosine + L-methionine + 2 oxidized [2Fe-2S]-[ferredoxin] + S-adenosyl-L-homocysteine. Specifically methylates position 2 of adenine 2503 in 23S rRNA and position 2 of adenine 37 in tRNAs. In Koribacter versatilis (strain Ellin345), this protein is Probable dual-specificity RNA methyltransferase RlmN.